The sequence spans 158 residues: pH 6 antigen (158 aa).

Residues 1 to 26 (MKMKCFAKNALAVTTLMIAACGMANA) form the signal peptide.

In terms of assembly, forms a homomer composed of subunits assembled in a large structure.

It localises to the fimbrium. Functionally, fibrillar structure, part of fimbriae, necessary for full virulence. In Yersinia pestis, this protein is pH 6 antigen (psaA).